Here is a 222-residue protein sequence, read N- to C-terminus: Collectrin (222 aa).

An N-terminal signal peptide occupies residues 1–14 (MLWLLFFLVTAIHA). Residues 15-141 (ELCQPGAENA…LAPPMDPSVP (127 aa)) lie on the Extracellular side of the membrane. A Collectrin-like domain is found at 21-222 (AENAFKVRLS…MTEDERLTPL (202 aa)). N-linked (GlcNAc...) asparagine glycans are attached at residues Asn76 and Asn93. Residues 142–162 (IWIIIFGVIFCIIIVAIALLI) form a helical membrane-spanning segment. Topologically, residues 163 to 222 (LSGIWQRRRKNKEPSEVDDAEDKCENMITIENGIPSDPLDMKGGHINDAFMTEDERLTPL) are cytoplasmic. Residues Thr214 and Thr220 each carry the phosphothreonine modification.

It belongs to the CLTRN family. As to quaternary structure, monomer. Homodimer; dimerization prevents CLTRN cleavage by BACE2. Interacts with SLC6A18; this interaction regulates the trafficking of SLC6A18 to the cell membrane and its amino acid transporter activity. Interacts with SLC6A19; this interaction regulates the trafficking of SLC6A19 to the cell membrane and its amino acid transporter activity. Interacts with SNAPIN. Post-translationally, glycosylated. Glycosylation is required for plasma membrane localization and for its cleavage by BACE2. In terms of processing, proteolytically processed in pancreatic beta cells by BACE2 leading to the generation and extracellular release of soluble CLTRN, and a corresponding cell-associated C-terminal fragment which is later cleaved by gamma-secretase. This shedding process inactivates CLTRN. Three cleavage sites have been identified for BACE2, two clustered sites after Phe-116 and Leu-118 and a more membrane proximal site at Phe-125; the preferred BACE2 cleavage site seems to be between Phe-125 and Leu-126, Phe-116 and Leu-118 act as alternative sites. Kidney; collecting ducts. Pancreas; beta cells of islets.

The protein localises to the cell membrane. In terms of biological role, plays an important role in amino acid transport by acting as binding partner of amino acid transporters SLC6A18 and SLC6A19, regulating their trafficking on the cell surface and their amino acid transporter activity. May also play a role in trafficking of amino acid transporters SLC3A1 and SLC7A9 to the renal cortical cell membrane. Regulator of SNARE complex function. Stimulator of beta cell replication. The sequence is that of Collectrin from Homo sapiens (Human).